The primary structure comprises 379 residues: Deoxyhypusine synthase (379 aa).

NAD(+) contacts are provided by residues 104 to 108 (SNLVS), 130 to 132 (TAG), Glu-136, and Asp-237. 135-136 (EE) lines the spermidine pocket. Asp-242 is a spermidine binding site. Gly-293 is a binding site for NAD(+). His-298 is a spermidine binding site. 318–319 (TA) contacts NAD(+). Residues 324–326 (GSD) and 333–339 (EAVSWGK) contribute to the spermidine site. Catalysis depends on Lys-339, which acts as the Nucleophile. 352–353 (DA) lines the NAD(+) pocket.

This sequence belongs to the deoxyhypusine synthase family. As to quaternary structure, homotetramer. NAD(+) serves as cofactor.

It catalyses the reaction [eIF5A protein]-L-lysine + spermidine = [eIF5A protein]-deoxyhypusine + propane-1,3-diamine. The protein operates within protein modification; eIF5A hypusination. Its function is as follows. Catalyzes the NAD-dependent oxidative cleavage of spermidine and the subsequent transfer of the butylamine moiety of spermidine to the epsilon-amino group of a specific lysine residue of the eIF-5A precursor protein to form the intermediate deoxyhypusine residue. Also able to produce homospermidine from putrescine. The protein is Deoxyhypusine synthase (DHS1) of Nicotiana tabacum (Common tobacco).